The chain runs to 268 residues: Probable RNA methyltransferase C2A9.10 (268 aa).

Residues 23-258 (DPRLKCLPDS…RTMYIYKKKG (236 aa)) enclose the Bin3-type SAM domain.

It belongs to the methyltransferase superfamily.

In terms of biological role, probable RNA methyltransferase. The sequence is that of Probable RNA methyltransferase C2A9.10 from Schizosaccharomyces pombe (strain 972 / ATCC 24843) (Fission yeast).